A 171-amino-acid chain; its full sequence is ATP synthase subunit b (171 aa).

A helical membrane pass occupies residues 2–22 (FLVKMVLGFLIFLSPLCATGL).

It belongs to the ATPase B chain family. F-type ATPases have 2 components, F(1) - the catalytic core - and F(0) - the membrane proton channel. F(1) has five subunits: alpha(3), beta(3), gamma(1), delta(1), epsilon(1). F(0) has three main subunits: a(1), b(2) and c(10-14). The alpha and beta chains form an alternating ring which encloses part of the gamma chain. F(1) is attached to F(0) by a central stalk formed by the gamma and epsilon chains, while a peripheral stalk is formed by the delta and b chains.

It localises to the cell inner membrane. In terms of biological role, f(1)F(0) ATP synthase produces ATP from ADP in the presence of a proton or sodium gradient. F-type ATPases consist of two structural domains, F(1) containing the extramembraneous catalytic core and F(0) containing the membrane proton channel, linked together by a central stalk and a peripheral stalk. During catalysis, ATP synthesis in the catalytic domain of F(1) is coupled via a rotary mechanism of the central stalk subunits to proton translocation. Its function is as follows. Component of the F(0) channel, it forms part of the peripheral stalk, linking F(1) to F(0). The protein is ATP synthase subunit b of Helicobacter pylori (strain Shi470).